A 293-amino-acid chain; its full sequence is 4-hydroxy-tetrahydrodipicolinate synthase (293 aa).

Thr-47 is a binding site for pyruvate. Catalysis depends on Tyr-136, which acts as the Proton donor/acceptor. Residue Lys-164 is the Schiff-base intermediate with substrate of the active site. Residue Ile-206 coordinates pyruvate.

This sequence belongs to the DapA family. As to quaternary structure, homotetramer; dimer of dimers.

The protein localises to the cytoplasm. It catalyses the reaction L-aspartate 4-semialdehyde + pyruvate = (2S,4S)-4-hydroxy-2,3,4,5-tetrahydrodipicolinate + H2O + H(+). Its pathway is amino-acid biosynthesis; L-lysine biosynthesis via DAP pathway; (S)-tetrahydrodipicolinate from L-aspartate: step 3/4. Functionally, catalyzes the condensation of (S)-aspartate-beta-semialdehyde [(S)-ASA] and pyruvate to 4-hydroxy-tetrahydrodipicolinate (HTPA). The polypeptide is 4-hydroxy-tetrahydrodipicolinate synthase (Listeria monocytogenes serotype 4b (strain CLIP80459)).